Here is a 345-residue protein sequence, read N- to C-terminus: Protein sdf-9 (345 aa).

Residues 33–284 (NRNRVVKIVP…SFIYEAVLDY (252 aa)) enclose the Tyrosine-protein phosphatase domain.

Belongs to the protein-tyrosine phosphatase family. In terms of tissue distribution, expressed in the 2 embryonic head hypodermal cells XXXL/R.

It is found in the cytoplasm. Its subcellular location is the cell membrane. Together with eak-4 and phosphatase eak-6, negatively regulates dauer larva formation downstream of insulin-like receptor daf-2 and in parallel of age-1, pdk-1 and akt-1. This is Protein sdf-9 from Caenorhabditis elegans.